A 394-amino-acid chain; its full sequence is Serine palmitoyltransferase (394 aa).

Residues 111–112 (GF), serine 183, histidine 211, and threonine 239 each bind pyridoxal 5'-phosphate. The residue at position 242 (lysine 242) is an N6-(pyridoxal phosphate)lysine.

This sequence belongs to the class-II pyridoxal-phosphate-dependent aminotransferase family. Pyridoxal 5'-phosphate serves as cofactor.

The enzyme catalyses L-serine + hexadecanoyl-CoA + H(+) = 3-oxosphinganine + CO2 + CoA. It participates in lipid metabolism; sphingolipid metabolism. Its function is as follows. Involved in de novo bacterial ceramide synthesis. Catalyzes the condensation of L-serine with palmitoyl-CoA (hexadecanoyl-CoA) to produce 3-oxosphinganine. Also capable of using alanine as substrate leading to the formation of 1-deoxysphinganine (1-deoxySa). Contributes to the levels of endogenous sphingolipids in its host. This chain is Serine palmitoyltransferase, found in Bacteroides ovatus (strain ATCC 8483 / DSM 1896 / JCM 5824 / BCRC 10623 / CCUG 4943 / NCTC 11153).